Consider the following 171-residue polypeptide: Shikimate kinase (171 aa).

14-19 (GAGKST) is an ATP binding site. Ser18 serves as a coordination point for Mg(2+). The substrate site is built by Asp36, Arg60, and Gly82. Arg120 contributes to the ATP binding site. A substrate-binding site is contributed by Arg139. Gln156 provides a ligand contact to ATP.

The protein belongs to the shikimate kinase family. In terms of assembly, monomer. It depends on Mg(2+) as a cofactor.

It localises to the cytoplasm. The enzyme catalyses shikimate + ATP = 3-phosphoshikimate + ADP + H(+). It participates in metabolic intermediate biosynthesis; chorismate biosynthesis; chorismate from D-erythrose 4-phosphate and phosphoenolpyruvate: step 5/7. Its function is as follows. Catalyzes the specific phosphorylation of the 3-hydroxyl group of shikimic acid using ATP as a cosubstrate. The sequence is that of Shikimate kinase from Alteromonas mediterranea (strain DSM 17117 / CIP 110805 / LMG 28347 / Deep ecotype).